Here is a 317-residue protein sequence, read N- to C-terminus: Glucose-6-phosphate isomerase, cytosolic 2B (317 aa).

Glutamate 108 functions as the Proton donor in the catalytic mechanism. Residues histidine 139 and lysine 264 contribute to the active site.

The protein belongs to the GPI family. Homodimer.

The protein localises to the cytoplasm. The enzyme catalyses alpha-D-glucose 6-phosphate = beta-D-fructose 6-phosphate. The protein operates within carbohydrate degradation; glycolysis; D-glyceraldehyde 3-phosphate and glycerone phosphate from D-glucose: step 2/4. The protein is Glucose-6-phosphate isomerase, cytosolic 2B (PGIC2-B) of Clarkia lewisii (Farewell-to-spring).